Reading from the N-terminus, the 118-residue chain is MAWALLLLTLLTQGTGSWAQSALTQPPFVSGAPGQSVTISCTGTSSDVGDYDHVFWYQKRLSTTSRLLIYNVNTRPSGISDLFSGSKSGNMASLTISGLKSEVEANYHCSLYSSSYTF.

The N-terminal stretch at 1–19 (MAWALLLLTLLTQGTGSWA) is a signal peptide. The segment at 20–44 (QSALTQPPFVSGAPGQSVTISCTGT) is framework-1. An Ig-like domain is found at 34 to 118 (GQSVTISCTG…CSLYSSSYTF (85 aa)). A disulfide bridge connects residues Cys41 and Cys109. The tract at residues 45–53 (SSDVGDYDH) is complementarity-determining-1. Residues 54–70 (VFWYQKRLSTTSRLLIY) form a framework-2 region. The segment at 71-73 (NVN) is complementarity-determining-2. The tract at residues 74 to 109 (TRPSGISDLFSGSKSGNMASLTISGLKSEVEANYHC) is framework-3. The segment at 110–118 (SLYSSSYTF) is complementarity-determining-3.

As to quaternary structure, immunoglobulins are composed of two identical heavy chains and two identical light chains; disulfide-linked.

The protein resides in the secreted. The protein localises to the cell membrane. In terms of biological role, probable non-functional open reading frame (ORF) of V region of the variable domain of immunoglobulin light chains. Non-functional ORF generally cannot participate in the synthesis of a productive immunoglobulin chain due to altered V-(D)-J or switch recombination and/or splicing site (at mRNA level) and/or conserved amino acid change (protein level). Immunoglobulins, also known as antibodies, are membrane-bound or secreted glycoproteins produced by B lymphocytes. In the recognition phase of humoral immunity, the membrane-bound immunoglobulins serve as receptors which, upon binding of a specific antigen, trigger the clonal expansion and differentiation of B lymphocytes into immunoglobulins-secreting plasma cells. Secreted immunoglobulins mediate the effector phase of humoral immunity, which results in the elimination of bound antigens. The antigen binding site is formed by the variable domain of one heavy chain, together with that of its associated light chain. Thus, each immunoglobulin has two antigen binding sites with remarkable affinity for a particular antigen. The variable domains are assembled by a process called V-(D)-J rearrangement and can then be subjected to somatic hypermutations which, after exposure to antigen and selection, allow affinity maturation for a particular antigen. This is Probable non-functional immunoglobulin lambda variable 2-33 from Homo sapiens (Human).